Reading from the N-terminus, the 380-residue chain is 3-dehydroquinate synthase (380 aa).

Residues 68–73 (PGEPNK), 102–106 (GTVLD), 126–127 (TT), Lys-139, and Lys-148 contribute to the NAD(+) site. 3 residues coordinate Zn(2+): Glu-181, His-243, and His-259.

This sequence belongs to the sugar phosphate cyclases superfamily. Dehydroquinate synthase family. It depends on NAD(+) as a cofactor. Co(2+) is required as a cofactor. The cofactor is Zn(2+).

Its subcellular location is the cytoplasm. It catalyses the reaction 7-phospho-2-dehydro-3-deoxy-D-arabino-heptonate = 3-dehydroquinate + phosphate. Its pathway is metabolic intermediate biosynthesis; chorismate biosynthesis; chorismate from D-erythrose 4-phosphate and phosphoenolpyruvate: step 2/7. Catalyzes the conversion of 3-deoxy-D-arabino-heptulosonate 7-phosphate (DAHP) to dehydroquinate (DHQ). This chain is 3-dehydroquinate synthase (aroB), found in Chlamydia pneumoniae (Chlamydophila pneumoniae).